We begin with the raw amino-acid sequence, 118 residues long: Ribosome-binding factor A (118 aa).

This sequence belongs to the RbfA family. In terms of assembly, monomer. Binds 30S ribosomal subunits, but not 50S ribosomal subunits or 70S ribosomes.

Its subcellular location is the cytoplasm. In terms of biological role, one of several proteins that assist in the late maturation steps of the functional core of the 30S ribosomal subunit. Associates with free 30S ribosomal subunits (but not with 30S subunits that are part of 70S ribosomes or polysomes). Required for efficient processing of 16S rRNA. May interact with the 5'-terminal helix region of 16S rRNA. The protein is Ribosome-binding factor A of Bacillus cereus (strain AH820).